Here is a 359-residue protein sequence, read N- to C-terminus: MTLESIMACCLSEEAKEARRINDEIERQLRRDKRDARRELKLLLLGTGESGKSTFIKQMRIIHGSGYSDEDKRGFTKLVYQNIFTAMQAMVRAMDTLKIPYKYEHNKAHAQLVREVDVEKVSAFENPYVDAIKSLWNDPGIQECYDRRREYQLSDSTKYYLNDLDRVADPSYLPTQQDVLRVRVPTTGIIEYPFDLQSVIFRMVDVGGQRSERRKWIHCFENVTSIMFLVALSEYDQVLVESDNENRMEESKALFRTIITYPWFQNSSVILFLNKKDLLEEKIMYSHLVDYFPEYDGPQRDAQAAREFILKMFVDLNPDSDKIIYSHFTCATDTENIRFVFAAVKDTILQLNLKEYNLV.

Residues Cys9 and Cys10 are each lipidated (S-palmitoyl cysteine). Residues 38 to 359 form the G-alpha domain; that stretch reads RELKLLLLGT…QLNLKEYNLV (322 aa). Positions 41–54 are G1 motif; the sequence is KLLLLGTGESGKST. Ser50, Gly51, Lys52, Ser53, Thr54, Ser156, Leu180, Arg181, and Arg183 together coordinate GTP. Ser53 contacts Mg(2+). The segment at 178 to 186 is G2 motif; that stretch reads DVLRVRVPT. Thr186 is a Mg(2+) binding site. Positions 201 to 210 are G3 motif; the sequence is FRMVDVGGQR. Residue Gln209 is modified to 5-glutamyl histamine. The tract at residues 270–277 is G4 motif; the sequence is ILFLNKKD. GTP contacts are provided by Asn274, Lys275, Asp277, and Ala331. The segment at 329 to 334 is G5 motif; the sequence is TCATDT.

This sequence belongs to the G-alpha family. G(q) subfamily. As to quaternary structure, g proteins are composed of 3 units; alpha, beta and gamma. The alpha chain contains the guanine nucleotide binding site. Interacts (GDP-bound form) with RIC8A (via C-terminus); promoting GNAQ folding and association with the plasma membrane. Binds NHERF1. Forms a complex with PECAM1 and BDKRB2. Interacts with GAS2L2. In terms of processing, palmitoylated by ZDHHC3 and ZDHHC7. Palmitoylation occurs in the Golgi and participates in the localization of GNAQ to the plasma membrane. Post-translationally, histaminylated at Gln-209 residues by TGM2.

It is found in the cell membrane. The protein resides in the golgi apparatus. It localises to the nucleus. Its subcellular location is the nucleus membrane. It carries out the reaction GTP + H2O = GDP + phosphate + H(+). Functionally, guanine nucleotide-binding proteins (G proteins) function as transducers downstream of G protein-coupled receptors (GPCRs) in numerous signaling cascades. The alpha chain contains the guanine nucleotide binding site and alternates between an active, GTP-bound state and an inactive, GDP-bound state. Signaling by an activated GPCR promotes GDP release and GTP binding. The alpha subunit has a low GTPase activity that converts bound GTP to GDP, thereby terminating the signal. Both GDP release and GTP hydrolysis are modulated by numerous regulatory proteins. Signaling is mediated via phospholipase C-beta-dependent inositol lipid hydrolysis for signal propagation: activates phospholipase C-beta: following GPCR activation, GNAQ activates PLC-beta (PLCB1, PLCB2, PLCB3 or PLCB4), leading to production of diacylglycerol (DAG) and inositol 1,4,5-trisphosphate (IP3). Required for platelet activation. Regulates B-cell selection and survival and is required to prevent B-cell-dependent autoimmunity. Regulates chemotaxis of BM-derived neutrophils and dendritic cells (in vitro). Transduces FFAR4 signaling in response to long-chain fatty acids (LCFAs). Together with GNA11, required for heart development. The chain is Guanine nucleotide-binding protein G(q) subunit alpha (Gnaq) from Rattus norvegicus (Rat).